We begin with the raw amino-acid sequence, 734 residues long: Mechanosensitive ion channel protein 10 (734 aa).

2 disordered regions span residues 1–75 and 115–136; these read MAEQ…LTQR and SFSRASPNNKSNRSVGSPAPVT. Basic and acidic residues predominate over residues 24-39; the sequence is EASRRSKEMASPESEK. At Ser-34 the chain carries Phosphoserine. Composition is skewed to polar residues over residues 65–75 and 117–129; these read PNQNNVGLTQR and SRASPNNKSNRSV. 2 positions are modified to phosphoserine: Ser-128 and Ser-131. 6 helical membrane passes run 164-184, 196-216, 249-269, 288-308, 516-536, and 551-571; these read ISTLALIESAFFVVILSALVA, FWGLEVWKWCVLVMVIFSGML, SVQVFIWLCLILVAWILLFNH, LISILTGAFFWLVKTLLLKIL, LVTAILMVVTVVIWLLLLEVA, and LAFIIGSTCKNLFESIVFVFV.

It belongs to the MscS (TC 1.A.23) family. As to expression, detected in the root tip and throughout the vasculature of the root and leaf.

The protein localises to the cell membrane. In terms of biological role, mechanosensitive channel that opens in response to stretch forces in the membrane lipid bilayer. The sequence is that of Mechanosensitive ion channel protein 10 (MSL10) from Arabidopsis thaliana (Mouse-ear cress).